The following is a 261-amino-acid chain: Monensin polyketide synthase putative ketoacyl reductase (261 aa).

10 to 34 (LVTGATSGIGLATARLLAAQGHLVF) serves as a coordination point for NAD(+). Residue serine 144 participates in substrate binding. Residue tyrosine 157 is the Proton acceptor of the active site.

It belongs to the short-chain dehydrogenases/reductases (SDR) family.

It participates in antifungal biosynthesis; monensin biosynthesis. The chain is Monensin polyketide synthase putative ketoacyl reductase from Streptomyces virginiae (Streptomyces cinnamonensis).